The chain runs to 428 residues: Histidinol dehydrogenase homolog (428 aa).

Positions 250 and 253 each coordinate Zn(2+). Active-site proton acceptor residues include Glu-320 and His-321. Residues Asp-354 and His-413 each contribute to the Zn(2+) site.

This sequence belongs to the histidinol dehydrogenase family. Zn(2+) is required as a cofactor.

This chain is Histidinol dehydrogenase homolog, found in Pelagibacter ubique (strain HTCC1062).